We begin with the raw amino-acid sequence, 433 residues long: Glutamate-1-semialdehyde 2,1-aminomutase (433 aa).

Residue Lys-267 is modified to N6-(pyridoxal phosphate)lysine.

This sequence belongs to the class-III pyridoxal-phosphate-dependent aminotransferase family. HemL subfamily. In terms of assembly, homodimer. Pyridoxal 5'-phosphate serves as cofactor.

It localises to the cytoplasm. The catalysed reaction is (S)-4-amino-5-oxopentanoate = 5-aminolevulinate. The protein operates within porphyrin-containing compound metabolism; protoporphyrin-IX biosynthesis; 5-aminolevulinate from L-glutamyl-tRNA(Glu): step 2/2. The sequence is that of Glutamate-1-semialdehyde 2,1-aminomutase from Syntrophobacter fumaroxidans (strain DSM 10017 / MPOB).